Consider the following 127-residue polypeptide: Small ribosomal subunit protein uS17m (127 aa).

This sequence belongs to the universal ribosomal protein uS17 family.

It is found in the mitochondrion. The chain is Small ribosomal subunit protein uS17m (mrps17) from Dictyostelium discoideum (Social amoeba).